A 484-amino-acid polypeptide reads, in one-letter code: tRNA sulfurtransferase (484 aa).

Residues 63 to 167 enclose the THUMP domain; it reads REMIERLTCT…DQRLYVIHNQ (105 aa). ATP-binding positions include 185 to 186, K267, G289, and Q298; that span reads LM. C346 and C457 form a disulfide bridge. A Rhodanese domain is found at 405-483; it reads ALPGQIVIDI…GHANVRVYRP (79 aa). Residue C457 is the Cysteine persulfide intermediate of the active site.

This sequence belongs to the ThiI family.

The protein resides in the cytoplasm. It carries out the reaction [ThiI sulfur-carrier protein]-S-sulfanyl-L-cysteine + a uridine in tRNA + 2 reduced [2Fe-2S]-[ferredoxin] + ATP + H(+) = [ThiI sulfur-carrier protein]-L-cysteine + a 4-thiouridine in tRNA + 2 oxidized [2Fe-2S]-[ferredoxin] + AMP + diphosphate. It catalyses the reaction [ThiS sulfur-carrier protein]-C-terminal Gly-Gly-AMP + S-sulfanyl-L-cysteinyl-[cysteine desulfurase] + AH2 = [ThiS sulfur-carrier protein]-C-terminal-Gly-aminoethanethioate + L-cysteinyl-[cysteine desulfurase] + A + AMP + 2 H(+). It functions in the pathway cofactor biosynthesis; thiamine diphosphate biosynthesis. Catalyzes the ATP-dependent transfer of a sulfur to tRNA to produce 4-thiouridine in position 8 of tRNAs, which functions as a near-UV photosensor. Also catalyzes the transfer of sulfur to the sulfur carrier protein ThiS, forming ThiS-thiocarboxylate. This is a step in the synthesis of thiazole, in the thiamine biosynthesis pathway. The sulfur is donated as persulfide by IscS. The polypeptide is tRNA sulfurtransferase (Pseudomonas putida (strain ATCC 47054 / DSM 6125 / CFBP 8728 / NCIMB 11950 / KT2440)).